A 69-amino-acid polypeptide reads, in one-letter code: Putative membrane protein insertion efficiency factor (69 aa).

The protein belongs to the UPF0161 family.

The protein resides in the cell inner membrane. Functionally, could be involved in insertion of integral membrane proteins into the membrane. In Geobacter sulfurreducens (strain ATCC 51573 / DSM 12127 / PCA), this protein is Putative membrane protein insertion efficiency factor.